The following is a 380-amino-acid chain: Succinyl-diaminopimelate desuccinylase (380 aa).

Histidine 70 contacts Zn(2+). The active site involves aspartate 72. Aspartate 103 lines the Zn(2+) pocket. The active-site Proton acceptor is glutamate 137. Zn(2+)-binding residues include glutamate 138, glutamate 166, and histidine 352.

Belongs to the peptidase M20A family. DapE subfamily. Homodimer. It depends on Zn(2+) as a cofactor. Requires Co(2+) as cofactor.

It catalyses the reaction N-succinyl-(2S,6S)-2,6-diaminopimelate + H2O = (2S,6S)-2,6-diaminopimelate + succinate. It participates in amino-acid biosynthesis; L-lysine biosynthesis via DAP pathway; LL-2,6-diaminopimelate from (S)-tetrahydrodipicolinate (succinylase route): step 3/3. Functionally, catalyzes the hydrolysis of N-succinyl-L,L-diaminopimelic acid (SDAP), forming succinate and LL-2,6-diaminopimelate (DAP), an intermediate involved in the bacterial biosynthesis of lysine and meso-diaminopimelic acid, an essential component of bacterial cell walls. The polypeptide is Succinyl-diaminopimelate desuccinylase (Azoarcus sp. (strain BH72)).